The sequence spans 200 residues: MGNGLSDQTSILSSLPSFQSFHIVILGLDCAGKTTVLYRLQFNEFVNTVPTKGFNTEKIKVTLGNSKTVTFHFWDVGGQEKLRPLWKSYTRCTDGIVFVVDSVDVERMEEAKTELHKITRISENQGVPVLIVANKQDLRNSLSLSEIEKLLAMGELSSSTPWHLQPTCAIIGDGLKEGLEKLHDMIIKRRKMLRQQKKKR.

Residue G2 is the site of N-myristoyl glycine attachment. GTP-binding positions include 27–34 (GLDCAGKT), 75–79 (DVGGQ), and 134–137 (NKQD).

It belongs to the small GTPase superfamily. Arf family. In terms of assembly, interacts with CYTH2. Interacts with KPNA2; the interaction is direct. Does not interact with ARL4A. Myristoylated. As to expression, expressed strongly in testis and liver. Expressed slightly in heart, spleen, lung and kidney.

It localises to the cell membrane. The protein localises to the cytoplasm. Its subcellular location is the nucleus. The protein resides in the nucleolus. Small GTP-binding protein which cycles between an inactive GDP-bound and an active GTP-bound form, and the rate of cycling is regulated by guanine nucleotide exchange factors (GEF) and GTPase-activating proteins (GAP). GTP-binding protein that does not act as an allosteric activator of the cholera toxin catalytic subunit. Recruits CYTH1, CYTH2, CYTH3 and CYTH4 to the plasma membrane in GDP-bound form. This Mus musculus (Mouse) protein is ADP-ribosylation factor-like protein 4A (Arl4a).